Consider the following 309-residue polypeptide: 1,2-phenylacetyl-CoA epoxidase, subunit A (309 aa).

Substrate-binding positions include arginine 33, glutamine 37, 103 to 106, asparagine 132, methionine 193, 202 to 204, lysine 214, and asparagine 218; these read KYSS and SPN.

As to quaternary structure, forms a stable heterotetramer (dimer of heterodimers) with PaaC. The cofactor is Fe cation.

It catalyses the reaction phenylacetyl-CoA + NADPH + O2 + H(+) = 2-(1,2-epoxy-1,2-dihydrophenyl)acetyl-CoA + NADP(+) + H2O. It functions in the pathway aromatic compound metabolism; phenylacetate degradation. Its function is as follows. Component of 1,2-phenylacetyl-CoA epoxidase multicomponent enzyme system which catalyzes the reduction of phenylacetyl-CoA (PA-CoA) to form 1,2-epoxyphenylacetyl-CoA. The subunit A is the catalytic subunit involved in the incorporation of one atom of molecular oxygen into phenylacetyl-CoA. This chain is 1,2-phenylacetyl-CoA epoxidase, subunit A (paaA), found in Escherichia coli (strain K12).